The primary structure comprises 194 residues: N-acetyltransferase (194 aa).

In terms of domain architecture, N-acetyltransferase spans 9-173; that stretch reads PQVRPGIAED…GRYWDVRWYE (165 aa).

This sequence belongs to the acetyltransferase family. PAT/BAR subfamily.

The protein is N-acetyltransferase (nat) of Streptomyces griseus.